The chain runs to 513 residues: MQLNSTEISELIKQRIAQFNVVSEAHNEGTIVSVSDGVIRIHGLAECMQGEMISLPGNRYAIALNLERDSVGAVVMGPYADLAEGMKVKCTGRILEVPVGRGLLGRVVNTLGAPIDGKGPLENDGFSAVEAIAPGVIERQSVDQPVQTGYKSVDAMIPIGRGQRELIIGDRQTGKTALAIDAIINQRDSGIKCVYVAIGQKASTISNVVRKLEEHGALANTIVVVATASESAALQYLAPYAGCAMGEYFRDRGEDALIIYDDLSKQAVAYRQISLLLRRPPGREAFPGDVFYLHSRLLERAARVNAEYVEAFTKGEVKGKTGSLTALPIIETQAGDVSAFVPTNVISITDGQIFLETNLFNAGIRPAVNPGISVSRVGGAAQTKIMKKLSGGIRTALAQYRELAAFSQFASDLDDATRKQLDHGQKVTELLKQKQYAPMSVAQQSLVLFAAERGYLADVELAKIGSFEAALLAYVDRDHAPLMQEINQSGGYNDEIEGKLKGILDSFKATQSW.

An ATP-binding site is contributed by 169–176; it reads GDRQTGKT.

The protein belongs to the ATPase alpha/beta chains family. As to quaternary structure, F-type ATPases have 2 components, CF(1) - the catalytic core - and CF(0) - the membrane proton channel. CF(1) has five subunits: alpha(3), beta(3), gamma(1), delta(1), epsilon(1). CF(0) has three main subunits: a(1), b(2) and c(9-12). The alpha and beta chains form an alternating ring which encloses part of the gamma chain. CF(1) is attached to CF(0) by a central stalk formed by the gamma and epsilon chains, while a peripheral stalk is formed by the delta and b chains.

The protein localises to the cell inner membrane. It catalyses the reaction ATP + H2O + 4 H(+)(in) = ADP + phosphate + 5 H(+)(out). Its function is as follows. Produces ATP from ADP in the presence of a proton gradient across the membrane. The alpha chain is a regulatory subunit. The polypeptide is ATP synthase subunit alpha (Klebsiella pneumoniae (strain 342)).